Consider the following 381-residue polypeptide: Cytochrome b (381 aa).

Helical transmembrane passes span 33–53 (FGSL…FLAM), 77–98 (WLLR…FLHV), 113–133 (WNIG…GYVL), and 178–198 (FFAF…VHLL). Residues His83 and His97 each contribute to the heme b site. Heme b-binding residues include His182 and His196. His201 contributes to the a ubiquinone binding site. 4 consecutive transmembrane segments (helical) span residues 226 to 246 (IKDA…ALFS), 288 to 308 (LGGV…PLLH), 320 to 340 (VSQT…WIGG), and 347 to 367 (FIII…VMMP).

This sequence belongs to the cytochrome b family. In terms of assembly, the cytochrome bc1 complex contains 11 subunits: 3 respiratory subunits (MT-CYB, CYC1 and UQCRFS1), 2 core proteins (UQCRC1 and UQCRC2) and 6 low-molecular weight proteins (UQCRH/QCR6, UQCRB/QCR7, UQCRQ/QCR8, UQCR10/QCR9, UQCR11/QCR10 and a cleavage product of UQCRFS1). This cytochrome bc1 complex then forms a dimer. It depends on heme b as a cofactor.

It is found in the mitochondrion inner membrane. Functionally, component of the ubiquinol-cytochrome c reductase complex (complex III or cytochrome b-c1 complex) that is part of the mitochondrial respiratory chain. The b-c1 complex mediates electron transfer from ubiquinol to cytochrome c. Contributes to the generation of a proton gradient across the mitochondrial membrane that is then used for ATP synthesis. The chain is Cytochrome b (MT-CYB) from Dasyurus hallucatus (Northern quoll).